A 213-amino-acid polypeptide reads, in one-letter code: Glycerol-3-phosphate acyltransferase (213 aa).

A run of 5 helical transmembrane segments spans residues 3–23 (ILLAALVAYLIGSVSFAVVVS), 51–71 (KAAILTLVGDAFKGWIAVWLA), 78–98 (DVAVAWVAIAVFLGHLYPVFF), 115–135 (AVHPVLGLATALTWLIVAFFF), and 140–160 (LAALVAAVFAPVFDVFLFGTP).

Belongs to the PlsY family. In terms of assembly, probably interacts with PlsX.

It localises to the cell inner membrane. The enzyme catalyses an acyl phosphate + sn-glycerol 3-phosphate = a 1-acyl-sn-glycero-3-phosphate + phosphate. Its pathway is lipid metabolism; phospholipid metabolism. Its function is as follows. Catalyzes the transfer of an acyl group from acyl-phosphate (acyl-PO(4)) to glycerol-3-phosphate (G3P) to form lysophosphatidic acid (LPA). This enzyme utilizes acyl-phosphate as fatty acyl donor, but not acyl-CoA or acyl-ACP. The polypeptide is Glycerol-3-phosphate acyltransferase (Burkholderia cenocepacia (strain ATCC BAA-245 / DSM 16553 / LMG 16656 / NCTC 13227 / J2315 / CF5610) (Burkholderia cepacia (strain J2315))).